A 492-amino-acid polypeptide reads, in one-letter code: Beclin 1-associated autophagy-related key regulator (492 aa).

Ser29 bears the Phosphoserine mark. The interval 43–58 (CPLCNTTRRRLTCAKC) is cysteine repeats. The stretch at 71–180 (DRERFIDKKE…KLGDLVEKKT (110 aa)) forms a coiled coil. Residues 410 to 473 (PGVAGESDES…PIASSSAGGM (64 aa)) are disordered. The BATS stretch occupies residues 413–492 (AGESDESGDE…SWFKAYTGHR (80 aa)). Residues 415–433 (ESDESGDERVSDEETDLGT) show a composition bias toward acidic residues. Ser416 carries the post-translational modification Phosphoserine. Thr429 is modified (phosphothreonine). Low complexity predominate over residues 448–473 (SQSVEVSQSQSTQASPPIASSSAGGM).

It belongs to the ATG14 family. Forms homooligomers; homo-oligomerization is essential for the roles in membrane tethering and enhancement of SNARE-mediated fusion. Component of the PI3K (PI3KC3/PI3K-III/class III phosphatidylinositol 3-kinase) complex I (PI3KC3-C1) in which the core composed of the catalytic subunit PIK3C3, the regulatory subunit PIK3R4 and BECN1 is associated with ATG14. PI3KC3-C1 displays a V-shaped architecture with PIK3R4 serving as a bridge between PIK3C3 and the ATG14:BECN1 subcomplex. PI3KC3-C1 can associate with further regulatory subunits. Interacts with PIK3CB. Interacts (via coiled-coil domain) with BECN2 (via coiled-coil domain); this interaction is tighter than BECN2 self-association. Interacts with the STX17-SNAP29 binary t-SNARE complex. Interacts with NRBF2. Interacts with PIK3C3 and BECN1; this interaction is increased in the absence of TMEM39A. Interacts with STEEP1; the interaction is required for trafficking of STING1 from the endoplasmic reticulum. Interacts with ARMC3 (via ARM domains). Post-translationally, ubiquitinated via 'Lys-6', 'Lys-11' and 'Lys-63'-linked polyubiquitin chains on multiple lysines by MARCHF7, leading to ATG14 aggregation and loss of interaction with STX17.

The protein resides in the cytoplasm. The protein localises to the endoplasmic reticulum membrane. It localises to the preautophagosomal structure membrane. It is found in the cytoplasmic vesicle. Its subcellular location is the autophagosome membrane. Required for both basal and inducible autophagy. Determines the localization of the autophagy-specific PI3-kinase complex PI3KC3-C1. Plays a role in autophagosome formation and MAP1LC3/LC3 conjugation to phosphatidylethanolamine. Promotes BECN1 translocation from the trans-Golgi network to autophagosomes. Enhances PIK3C3 activity in a BECN1-dependent manner. Essential for the autophagy-dependent phosphorylation of BECN1. Stimulates the phosphorylation of BECN1, but suppresses the phosphorylation PIK3C3 by AMPK. Binds to STX17-SNAP29 binary t-SNARE complex on autophagosomes and primes it for VAMP8 interaction to promote autophagosome-endolysosome fusion. Modulates the hepatic lipid metabolism. The sequence is that of Beclin 1-associated autophagy-related key regulator from Homo sapiens (Human).